Consider the following 283-residue polypeptide: Pantothenate synthetase (283 aa).

ATP is bound at residue 30-37 (MGALHEGH). Residue His-37 is the Proton donor of the active site. Residue Gln-61 coordinates (R)-pantoate. Gln-61 serves as a coordination point for beta-alanine. 147-150 (GEKD) is a binding site for ATP. Gln-153 contributes to the (R)-pantoate binding site. Residues Val-176 and 184–187 (VSSR) each bind ATP.

It belongs to the pantothenate synthetase family. As to quaternary structure, homodimer.

It localises to the cytoplasm. The enzyme catalyses (R)-pantoate + beta-alanine + ATP = (R)-pantothenate + AMP + diphosphate + H(+). Its pathway is cofactor biosynthesis; (R)-pantothenate biosynthesis; (R)-pantothenate from (R)-pantoate and beta-alanine: step 1/1. Catalyzes the condensation of pantoate with beta-alanine in an ATP-dependent reaction via a pantoyl-adenylate intermediate. This chain is Pantothenate synthetase, found in Chlorobium limicola (strain DSM 245 / NBRC 103803 / 6330).